The primary structure comprises 118 residues: Small ribosomal subunit protein uS13 (118 aa).

Positions 94–118 (GLPVRGQRTKTNARTRKGPRKPIKK) are disordered.

Belongs to the universal ribosomal protein uS13 family. As to quaternary structure, part of the 30S ribosomal subunit. Forms a loose heterodimer with protein S19. Forms two bridges to the 50S subunit in the 70S ribosome.

Its function is as follows. Located at the top of the head of the 30S subunit, it contacts several helices of the 16S rRNA. In the 70S ribosome it contacts the 23S rRNA (bridge B1a) and protein L5 of the 50S subunit (bridge B1b), connecting the 2 subunits; these bridges are implicated in subunit movement. Contacts the tRNAs in the A and P-sites. This chain is Small ribosomal subunit protein uS13, found in Salmonella paratyphi A (strain ATCC 9150 / SARB42).